Here is a 245-residue protein sequence, read N- to C-terminus: MSQVNMRDMLKAGVHFGHQTRYWNPKMGKYIFGARNKIHIVNLEKTLPMFNDALSFVERLAQGKNKILFVGTKRSAGKIVAEQAARCGSPYVDHRWLGGMLTNYKTIRASIKRLRDLETQAEDGTFAKLTKKEALMRSRDLEKLDRSLGGIKDMGGLPDALFVIDVDHERIAITEANKLGIPVIGVVDTNSSPEGVDYIIPGNDDAIRAIELYMTSMADAVIRGRNNVAGGTEVYAEEAAAPAAE.

Belongs to the universal ribosomal protein uS2 family.

The polypeptide is Small ribosomal subunit protein uS2 (Pseudomonas putida (strain ATCC 47054 / DSM 6125 / CFBP 8728 / NCIMB 11950 / KT2440)).